The primary structure comprises 353 residues: GDP-mannose transporter (353 aa).

The Cytoplasmic segment spans residues 1–31; the sequence is MGLLLSYLFGYIFYSVNKKFHIMEKFGASNS. A helical transmembrane segment spans residues 32–52; it reads IVNNGPVSIFAYCASSILMTV. At 53–66 the chain is on the lumenal side; the sequence is TNKFVVGAYEFNLN. The helical transmembrane segment at 67-87 threads the bilayer; the sequence is FFLLAVQAAVCLVTIATLKGL. At 88 to 102 the chain is on the cytoplasmic side; that stretch reads GIITYRQFNKDEAKK. Residues 103–122 form a helical membrane-spanning segment; the sequence is WFPIAFLLVLMIYTSSKALQ. Over 123–125 the chain is Lumenal; that stretch reads YLS. The helical transmembrane segment at 126–148 threads the bilayer; it reads IPVYTIFKNLTIILIAYGEVIWF. Topologically, residues 149–154 are cytoplasmic; that stretch reads GGKVTT. Residues 155–172 traverse the membrane as a helical segment; sequence MALGSFILMVLSSVIAYY. At 173–187 the chain is on the lumenal side; the sequence is GDTAETGEKTAEMHL. Residues 188-208 form a helical membrane-spanning segment; that stretch reads LYLGYAWMFTNCFSSAAFVLI. The Cytoplasmic segment spans residues 209-227; that stretch reads MRKRIKLTNFKDFDTMYYN. The helical transmembrane segment at 228–248 threads the bilayer; that stretch reads NLLSLPLLLVFSFLFEDWSSV. Residues 249-262 lie on the Lumenal side of the membrane; it reads NLNKNFPPDNRNTT. An N-linked (GlcNAc...) asparagine glycan is attached at asparagine 260. A helical membrane pass occupies residues 263–283; the sequence is IFVMILSGASSVGISYCSAWC. At 284–290 the chain is on the cytoplasmic side; that stretch reads VRVTSST. Residues 291–313 traverse the membrane as a helical segment; that stretch reads TYSMVGALNKLPIALSGLVFFNA. At 314–316 the chain is on the lumenal side; sequence AVN. A helical membrane pass occupies residues 317–336; it reads FWSVSSIFVGFLAGVFYAVA. Residues 337–353 are Cytoplasmic-facing; sequence KQKQQKENAQQLPVANK.

It belongs to the TPT transporter family. SLC35D subfamily. In terms of assembly, homooligomer.

The protein localises to the golgi apparatus membrane. It localises to the cytoplasmic vesicle membrane. It is found in the endoplasmic reticulum membrane. In terms of biological role, involved in the import of GDP-mannose from the cytoplasm into the Golgi lumen. The sequence is that of GDP-mannose transporter (VRG4) from Meyerozyma guilliermondii (strain ATCC 6260 / CBS 566 / DSM 6381 / JCM 1539 / NBRC 10279 / NRRL Y-324) (Yeast).